A 370-amino-acid polypeptide reads, in one-letter code: Putative agmatine deiminase (370 aa).

Cys361 serves as the catalytic Amidino-cysteine intermediate.

Belongs to the agmatine deiminase family.

It catalyses the reaction agmatine + H2O = N-carbamoylputrescine + NH4(+). The polypeptide is Putative agmatine deiminase (Shewanella baltica (strain OS223)).